The primary structure comprises 448 residues: MGKYFGTDGVRGVANKELTPELAFKIGRFGGYVLTKDTDRPKVIIGRDTRVSGHMLEGALVAGLLSTGAEVMRLGVISTPGVAYLTKALDAQAGVMISASHNPVQDNGIKFFGSDGFKLTDEQEAEIEALLDKEVDELPRPTGTNLGQVSDYFEGGQKYLQYIKQTVEEDFSGLHIALDCAHGATSSLAPYLFADLEADISTMGTSPNGMNINEGVGSTHPEVLAELVKEKGADIGLAFDGDGDRLIAVDEKGNIVDGDQIMFICAKYMKETGQLKHNTVVSTVMSNLGFYKALEANNITSDKTAVGDRYVMEEMKRGGYNLGGEQSGHIILLDYITTGDGMLSALQLVNIMKMTKKPLSELAGEMTKFPQLLVNVRVTDKKLALENEKIKEIIRVVEEEMNGDGRILVRPSGTEPLIRVMAEAPTQEVCDAFVHRIVEVVKAEVGAE.

Ser-100 acts as the Phosphoserine intermediate in catalysis. Mg(2+)-binding residues include Ser-100, Asp-240, Asp-242, and Asp-244. A Phosphoserine modification is found at Ser-100.

The protein belongs to the phosphohexose mutase family. Mg(2+) serves as cofactor. Activated by phosphorylation.

It carries out the reaction alpha-D-glucosamine 1-phosphate = D-glucosamine 6-phosphate. Catalyzes the conversion of glucosamine-6-phosphate to glucosamine-1-phosphate. The polypeptide is Phosphoglucosamine mutase (Bacillus cereus (strain G9842)).